A 238-amino-acid polypeptide reads, in one-letter code: Segregation and condensation protein A (238 aa).

This sequence belongs to the ScpA family. Component of a cohesin-like complex composed of ScpA, ScpB and the Smc homodimer, in which ScpA and ScpB bind to the head domain of Smc. The presence of the three proteins is required for the association of the complex with DNA.

The protein resides in the cytoplasm. Participates in chromosomal partition during cell division. May act via the formation of a condensin-like complex containing Smc and ScpB that pull DNA away from mid-cell into both cell halves. The polypeptide is Segregation and condensation protein A (Macrococcus caseolyticus (strain JCSC5402) (Macrococcoides caseolyticum)).